Reading from the N-terminus, the 98-residue chain is NADH-ubiquinone oxidoreductase chain 4L (98 aa).

A run of 3 helical transmembrane segments spans residues 1–21 (MSLTYLNIMLAFSTSLLGLLM), 31–51 (LCLEGLVLSLFVLTTLMVLTI), and 61–81 (IILLVFAACEAALGLSLLVVV).

The protein belongs to the complex I subunit 4L family. As to quaternary structure, core subunit of respiratory chain NADH dehydrogenase (Complex I) which is composed of 45 different subunits.

It is found in the mitochondrion inner membrane. It catalyses the reaction a ubiquinone + NADH + 5 H(+)(in) = a ubiquinol + NAD(+) + 4 H(+)(out). Functionally, core subunit of the mitochondrial membrane respiratory chain NADH dehydrogenase (Complex I) which catalyzes electron transfer from NADH through the respiratory chain, using ubiquinone as an electron acceptor. Part of the enzyme membrane arm which is embedded in the lipid bilayer and involved in proton translocation. The sequence is that of NADH-ubiquinone oxidoreductase chain 4L (MT-ND4L) from Chalinolobus tuberculatus (New Zealand long-tailed bat).